The primary structure comprises 167 residues: Urease accessory protein UreE (167 aa).

It belongs to the UreE family.

The protein resides in the cytoplasm. Functionally, involved in urease metallocenter assembly. Binds nickel. Probably functions as a nickel donor during metallocenter assembly. The polypeptide is Urease accessory protein UreE (Pseudomonas aeruginosa (strain UCBPP-PA14)).